Reading from the N-terminus, the 495-residue chain is uncharacterized protein (495 aa).

FAD is bound by residues S16, E36, W45, D56, Y62, and V105.

Belongs to the FAD-binding monooxygenase family. The cofactor is FAD.

This is an uncharacterized protein from Mycobacterium tuberculosis (strain CDC 1551 / Oshkosh).